The primary structure comprises 925 residues: Neuronal PAS domain-containing protein 3 (925 aa).

The region spanning 58 to 111 (LRKEKSRDAARSRRGKENFEFYELAKLLPLPAAITSQLDKASIIRLTISYLKMR) is the bHLH domain. Positions 60–71 (KEKSRDAARSRR) are DNA-binding. Disordered stretches follow at residues 119–138 (PPWNLRMEGPPPNTSVKGAQ) and 219–257 (LPPGRGLLSQGTTEDAASSASSSSQSETPEPVETTSPSL). One can recognise a PAS 1 domain in the interval 152 to 222 (EAHLGSHILQ…EQLGMKLPPG (71 aa)). Residues 234 to 256 (AASSASSSSQSETPEPVETTSPS) show a composition bias toward low complexity. The region spanning 324–394 (PPPTINEVRI…HSHLDLLNKG (71 aa)) is the PAS 2 domain. The 44-residue stretch at 398–441 (TKYYRWMQKNGGYIWIQSSATIAINAKNANEKNIIWVNYLLSNP) folds into the PAC domain. Disordered regions lie at residues 457-555 (PEKA…FGAL), 576-645 (PCES…SSPH), and 664-774 (NESS…GASN). Basic and acidic residues-rich tracts occupy residues 484–493 (ENSKSDEKGN) and 529–549 (DSRDSDDSFEHSDFEHPKAAE). The segment covering 601–622 (KHQKRKRRRKRQKGGSASRRRL) has biased composition (basic residues). Over residues 680–690 (NESPYSMTKPP) the composition is skewed to polar residues. Composition is skewed to gly residues over residues 700–710 (GQGGSIGGGGA) and 760–771 (GGGAGSGGGGPG).

As to quaternary structure, efficient DNA binding requires dimerization with another bHLH protein. Interacts with ARNT; forms a heterodimer that binds core DNA sequence 5'-[AG]CGTG-3' within the hypoxia response element (HRE) of target gene promoters. As to expression, detected exclusively in adult brain in inhibitory interneurons.

The protein localises to the nucleus. Its function is as follows. May play a broad role in neurogenesis. May control regulatory pathways relevant to schizophrenia and to psychotic illness. The chain is Neuronal PAS domain-containing protein 3 (Npas3) from Mus musculus (Mouse).